Consider the following 290-residue polypeptide: 4-hydroxybenzoate octaprenyltransferase (290 aa).

Helical transmembrane passes span 23–43 (IGAL…TPGV), 46–66 (LWIL…GCVV), 99–119 (LFVV…TMTI), 141–161 (LPQV…FAAV), 163–183 (ESVP…AVAY), 213–233 (LIIG…GELN), 234–254 (GLGW…VYQQ), and 268–288 (AFMN…MSYW).

It belongs to the UbiA prenyltransferase family. It depends on Mg(2+) as a cofactor.

The protein localises to the cell inner membrane. It catalyses the reaction all-trans-octaprenyl diphosphate + 4-hydroxybenzoate = 4-hydroxy-3-(all-trans-octaprenyl)benzoate + diphosphate. It functions in the pathway cofactor biosynthesis; ubiquinone biosynthesis. Its function is as follows. Catalyzes the prenylation of para-hydroxybenzoate (PHB) with an all-trans polyprenyl group. Mediates the second step in the final reaction sequence of ubiquinone-8 (UQ-8) biosynthesis, which is the condensation of the polyisoprenoid side chain with PHB, generating the first membrane-bound Q intermediate 3-octaprenyl-4-hydroxybenzoate. In Escherichia coli O6:K15:H31 (strain 536 / UPEC), this protein is 4-hydroxybenzoate octaprenyltransferase.